A 155-amino-acid chain; its full sequence is MKVIIDGDACPVKNILFNICEHHDLELILVHSIAHMSKGEQKIETIIVDNEAEAADIMIMNRTKAGDLVITADTGLAALVLGKRAFVLSPWGHFYTNDNIGSLLDRRYLNRKMMLQGGRVKGPKKRNKEDDHRFQQALESFLEKHLRNSSKQEGV.

This sequence belongs to the UPF0178 family.

This is UPF0178 protein Amet_2995 from Alkaliphilus metalliredigens (strain QYMF).